A 314-amino-acid chain; its full sequence is Cytochrome f (314 aa).

A signal peptide spans methionine 1 to alanine 29. Positions 30, 50, 53, and 54 each coordinate heme. Residues valine 280–lysine 300 traverse the membrane as a helical segment.

The protein belongs to the cytochrome f family. The 4 large subunits of the cytochrome b6-f complex are cytochrome b6, subunit IV (17 kDa polypeptide, petD), cytochrome f and the Rieske protein, while the 4 small subunits are PetG, PetL, PetM and PetN. The complex functions as a dimer. Heme is required as a cofactor.

The protein resides in the plastid. It localises to the chloroplast thylakoid membrane. Component of the cytochrome b6-f complex, which mediates electron transfer between photosystem II (PSII) and photosystem I (PSI), cyclic electron flow around PSI, and state transitions. In Illicium oligandrum (Star anise), this protein is Cytochrome f.